Consider the following 88-residue polypeptide: Small ribosomal subunit protein uS15c (88 aa).

The protein belongs to the universal ribosomal protein uS15 family. Part of the 30S ribosomal subunit.

The protein resides in the plastid. It is found in the chloroplast. In Physcomitrium patens (Spreading-leaved earth moss), this protein is Small ribosomal subunit protein uS15c (rps15).